We begin with the raw amino-acid sequence, 259 residues long: Phosphatidylglycerol--prolipoprotein diacylglyceryl transferase (259 aa).

The next 4 helical transmembrane spans lie at 12 to 32 (LSLH…VYLA), 46 to 66 (IIDF…IYYV), 83 to 103 (IWNG…VLFV), and 109 to 129 (VLNP…AQAI). An a 1,2-diacyl-sn-glycero-3-phospho-(1'-sn-glycerol)-binding site is contributed by Arg131. Transmembrane regions (helical) follow at residues 167–187 (VPTF…IMVW), 194–214 (LLDG…RLVI), and 226–246 (GIRV…VFIF).

This sequence belongs to the Lgt family.

It localises to the cell membrane. The enzyme catalyses L-cysteinyl-[prolipoprotein] + a 1,2-diacyl-sn-glycero-3-phospho-(1'-sn-glycerol) = an S-1,2-diacyl-sn-glyceryl-L-cysteinyl-[prolipoprotein] + sn-glycerol 1-phosphate + H(+). Its pathway is protein modification; lipoprotein biosynthesis (diacylglyceryl transfer). In terms of biological role, catalyzes the transfer of the diacylglyceryl group from phosphatidylglycerol to the sulfhydryl group of the N-terminal cysteine of a prolipoprotein, the first step in the formation of mature lipoproteins. This chain is Phosphatidylglycerol--prolipoprotein diacylglyceryl transferase, found in Streptococcus equi subsp. zooepidemicus (strain MGCS10565).